An 815-amino-acid chain; its full sequence is uncharacterized protein (815 aa).

The zn(2)-C6 fungal-type DNA-binding region spans 31–57 (CDMCRRKKIKCDGLRPCKNCKAGKLEC). The helical transmembrane segment at 560–580 (YWTTVYCGFSTIVTLIFAALL) threads the bilayer. Disordered regions lie at residues 646-668 (ESNVPINNGPQQSIDKESNSNTQ) and 769-792 (DPDVSDGKSRESSSLNNSTPFNPT). The segment covering 780 to 792 (SSSLNNSTPFNPT) has biased composition (polar residues).

It localises to the cytoplasm. Its subcellular location is the nucleus membrane. This is an uncharacterized protein from Schizosaccharomyces pombe (strain 972 / ATCC 24843) (Fission yeast).